The sequence spans 1085 residues: Phosphorylase b kinase regulatory subunit beta (1085 aa).

A phosphoserine mark is found at serine 10, serine 19, and serine 693. Calmodulin-binding regions lie at residues 760 to 787 (RVYR…VVDS) and 912 to 943 (SGRC…ILER). Cysteine 1082 carries the S-farnesyl cysteine lipid modification.

Belongs to the phosphorylase b kinase regulatory chain family. In terms of assembly, hexadecamer of 4 heterotetramers, each composed of alpha, beta, gamma, and delta subunits. Alpha (PHKA1 or PHKA2) and beta (PHKB) are regulatory subunits, gamma (PHKG1 or PHKG2) is the catalytic subunit, and delta is calmodulin. Post-translationally, although the final Cys may be farnesylated, the terminal tripeptide is probably not removed, and the C-terminus is not methylated.

It localises to the cell membrane. It functions in the pathway glycan biosynthesis; glycogen metabolism. By phosphorylation of various serine residues. Its function is as follows. Phosphorylase b kinase catalyzes the phosphorylation of serine in certain substrates, including troponin I. The beta chain acts as a regulatory unit and modulates the activity of the holoenzyme in response to phosphorylation. The chain is Phosphorylase b kinase regulatory subunit beta (Phkb) from Mus musculus (Mouse).